The following is a 441-amino-acid chain: MREIVHVQVGQCGNQIGAKFWEVISHEHGVDTNGTYFGNKDNQIEKIDVYYNEVSGNRFVPRAVLVDLEPGTMDSVRASNYGRLFRPDNFVFGQSGAGNNWAKGHYTEGAELIESAMDIIRKESEQCECLQGFQIAHSLGGGTGSGMGTLLISKIREEYPDRMMCTYSVVPSPKVSDTVVEPYNCTLSIHQLVENADEVFCIDNEALYDICFRTLKLVTPSYGDLNHLVSAVMSGITCSLRFPGQLNADLRKLAVNLVPFPRLHFFMVGFAPLGSRGSQQYRSMTVNDLTQQMFDSKNMMAACDPKNGRYLTAAAYFRGKISTKEVDDQMIEIQNKQSEHFVEWIPHNIKSSVCDIPPKGMKMSAAFIGNSTSIQELFKRVGEQFQAMFRRKAFLHWYTGEGMDEMEFTEAESNMQDLVSEYQQYQDAKMDNDAFEDQDLY.

GTP-binding residues include glutamine 11, glutamate 69, serine 138, glycine 142, threonine 143, glycine 144, asparagine 204, and asparagine 226. A Mg(2+)-binding site is contributed by glutamate 69.

The protein belongs to the tubulin family. In terms of assembly, dimer of alpha and beta chains. A typical microtubule is a hollow water-filled tube with an outer diameter of 25 nm and an inner diameter of 15 nM. Alpha-beta heterodimers associate head-to-tail to form protofilaments running lengthwise along the microtubule wall with the beta-tubulin subunit facing the microtubule plus end conferring a structural polarity. Microtubules usually have 13 protofilaments but different protofilament numbers can be found in some organisms and specialized cells. It depends on Mg(2+) as a cofactor.

Its function is as follows. Tubulin is the major constituent of microtubules, a cylinder consisting of laterally associated linear protofilaments composed of alpha- and beta-tubulin heterodimers. Microtubules grow by the addition of GTP-tubulin dimers to the microtubule end, where a stabilizing cap forms. Below the cap, tubulin dimers are in GDP-bound state, owing to GTPase activity of alpha-tubulin. The sequence is that of Tubulin beta chain, nucleomorph (tubB) from Guillardia theta (Cryptophyte).